The following is a 252-amino-acid chain: Ribosomal RNA small subunit methyltransferase A (252 aa).

Asn-11, Leu-13, Gly-38, Glu-60, Asp-82, and Asn-99 together coordinate S-adenosyl-L-methionine.

It belongs to the class I-like SAM-binding methyltransferase superfamily. rRNA adenine N(6)-methyltransferase family. RsmA subfamily.

It localises to the cytoplasm. The catalysed reaction is adenosine(1518)/adenosine(1519) in 16S rRNA + 4 S-adenosyl-L-methionine = N(6)-dimethyladenosine(1518)/N(6)-dimethyladenosine(1519) in 16S rRNA + 4 S-adenosyl-L-homocysteine + 4 H(+). Specifically dimethylates two adjacent adenosines (A1518 and A1519) in the loop of a conserved hairpin near the 3'-end of 16S rRNA in the 30S particle. May play a critical role in biogenesis of 30S subunits. In Hydrogenobaculum sp. (strain Y04AAS1), this protein is Ribosomal RNA small subunit methyltransferase A.